The primary structure comprises 237 residues: uncharacterized protein (237 aa).

Residues 3 to 116 (SALLIDDERF…RLAKTVQRLL (114 aa)) enclose the Response regulatory domain. Asp54 bears the 4-aspartylphosphate mark. Positions 135–236 (IPCTGLNRIV…LKELKEMLGF (102 aa)) constitute an HTH LytTR-type domain.

This is an uncharacterized protein from Vibrio cholerae serotype O1 (strain ATCC 39315 / El Tor Inaba N16961).